Reading from the N-terminus, the 254-residue chain is Nickel import ATP-binding protein NikD (254 aa).

Residues 2-241 (PQQIELRNIA…PKHAVTRSLV (240 aa)) enclose the ABC transporter domain. ATP is bound at residue 36–43 (GGSGSGKS).

The protein belongs to the ABC transporter superfamily. Nickel importer (TC 3.A.1.5.3) family. As to quaternary structure, the complex is composed of two ATP-binding proteins (NikD and NikE), two transmembrane proteins (NikB and NikC) and a solute-binding protein (NikA).

The protein resides in the cell inner membrane. It carries out the reaction Ni(2+)(out) + ATP + H2O = Ni(2+)(in) + ADP + phosphate + H(+). Part of the ABC transporter complex NikABCDE involved in nickel import. Responsible for energy coupling to the transport system. The sequence is that of Nickel import ATP-binding protein NikD from Escherichia coli O157:H7.